The chain runs to 537 residues: Apolipoprotein N-acyltransferase (537 aa).

6 helical membrane-spanning segments follow: residues 10 to 30 (IALA…ITAG), 37 to 57 (LAPF…VWLI), 76 to 96 (YWFG…AFFV), 107 to 127 (FAVL…FALA), 181 to 201 (IGLW…ATLI), and 210 to 230 (AWRA…FGAI). The CN hydrolase domain occupies 248–501 (MQPNLQQDAK…EGILDASLPA (254 aa)). Glutamate 295 serves as the catalytic Proton acceptor. Lysine 360 is an active-site residue. The active-site Nucleophile is cysteine 413. The chain crosses the membrane as a helical span at residues 507 to 527 (IYARVGDVPAAVLVALAVLLA).

It belongs to the CN hydrolase family. Apolipoprotein N-acyltransferase subfamily.

The protein resides in the cell inner membrane. It catalyses the reaction N-terminal S-1,2-diacyl-sn-glyceryl-L-cysteinyl-[lipoprotein] + a glycerophospholipid = N-acyl-S-1,2-diacyl-sn-glyceryl-L-cysteinyl-[lipoprotein] + a 2-acyl-sn-glycero-3-phospholipid + H(+). The protein operates within protein modification; lipoprotein biosynthesis (N-acyl transfer). Catalyzes the phospholipid dependent N-acylation of the N-terminal cysteine of apolipoprotein, the last step in lipoprotein maturation. In Bradyrhizobium diazoefficiens (strain JCM 10833 / BCRC 13528 / IAM 13628 / NBRC 14792 / USDA 110), this protein is Apolipoprotein N-acyltransferase.